The primary structure comprises 134 residues: Profilin-4 (134 aa).

A disulfide bond links C13 and C118. An Involved in PIP2 interaction motif is present at residues 84–100; the sequence is AVIRGKKGSGGITIKKT. T114 bears the Phosphothreonine mark.

Belongs to the profilin family. As to quaternary structure, occurs in many kinds of cells as a complex with monomeric actin in a 1:1 ratio. In terms of processing, phosphorylated by MAP kinases.

Its subcellular location is the cytoplasm. The protein localises to the cytoskeleton. Functionally, binds to actin and affects the structure of the cytoskeleton. At high concentrations, profilin prevents the polymerization of actin, whereas it enhances it at low concentrations. This chain is Profilin-4, found in Olea europaea (Common olive).